We begin with the raw amino-acid sequence, 192 residues long: 21.7 kDa class VI heat shock protein (192 aa).

The sHSP domain occupies 80-192 (SLRSLGQCRV…IPKINSKNKF (113 aa)).

It belongs to the small heat shock protein (HSP20) family. In terms of assembly, may form oligomeric structures.

The protein resides in the cytoplasm. The polypeptide is 21.7 kDa class VI heat shock protein (HSP21.7) (Arabidopsis thaliana (Mouse-ear cress)).